A 396-amino-acid chain; its full sequence is Acetate kinase (396 aa).

Residue Asn-8 participates in Mg(2+) binding. Residue Lys-15 participates in ATP binding. Residue Arg-89 participates in substrate binding. Asp-146 functions as the Proton donor/acceptor in the catalytic mechanism. Residues 206–210 (HIGNG), 283–285 (DMR), and 331–335 (GVGEN) contribute to the ATP site. Glu-383 contributes to the Mg(2+) binding site.

Belongs to the acetokinase family. In terms of assembly, homodimer. Requires Mg(2+) as cofactor. Mn(2+) serves as cofactor.

It is found in the cytoplasm. The enzyme catalyses acetate + ATP = acetyl phosphate + ADP. It participates in metabolic intermediate biosynthesis; acetyl-CoA biosynthesis; acetyl-CoA from acetate: step 1/2. Functionally, catalyzes the formation of acetyl phosphate from acetate and ATP. Can also catalyze the reverse reaction. This Streptococcus pneumoniae (strain Hungary19A-6) protein is Acetate kinase.